The sequence spans 456 residues: L-seryl-tRNA(Sec) selenium transferase (456 aa).

Lys288 carries the post-translational modification N6-(pyridoxal phosphate)lysine.

This sequence belongs to the SelA family. Pyridoxal 5'-phosphate serves as cofactor.

It localises to the cytoplasm. The enzyme catalyses L-seryl-tRNA(Sec) + selenophosphate + H(+) = L-selenocysteinyl-tRNA(Sec) + phosphate. The protein operates within aminoacyl-tRNA biosynthesis; selenocysteinyl-tRNA(Sec) biosynthesis; selenocysteinyl-tRNA(Sec) from L-seryl-tRNA(Sec) (bacterial route): step 1/1. Functionally, converts seryl-tRNA(Sec) to selenocysteinyl-tRNA(Sec) required for selenoprotein biosynthesis. The protein is L-seryl-tRNA(Sec) selenium transferase of Helicobacter hepaticus (strain ATCC 51449 / 3B1).